The chain runs to 1276 residues: Probable histone acetyltransferase HAC-like 3 (1276 aa).

The disordered stretch occupies residues 391-421; sequence VDRAEQTSNSTVSKPTSPASDGSSGKHYPAK. A compositionally biased stretch (polar residues) spans 396–413; sequence QTSNSTVSKPTSPASDGS. The segment at 621-689 adopts a PHD-type zinc-finger fold; it reads SSICGRCHHL…EYTCAKCFLK (69 aa). Positions 704 to 1130 constitute a CBP/p300-type HAT domain; that stretch reads ILGARELPRT…ILYHLHDSTC (427 aa). Acetyl-CoA is bound by residues 827–829, 846–847, and Trp-902; these read IDS and RT. A coiled-coil region spans residues 953 to 973; sequence EAERLLEKKDDDTSQKKETQL. 2 ZZ-type zinc fingers span residues 1013–1076 and 1125–1187; these read CLQQ…EEPL and LHDS…LQDY. Zn(2+) is bound by residues Cys-1018, Cys-1021, Cys-1033, Cys-1036, Cys-1042, Cys-1045, His-1058, His-1066, Cys-1130, Cys-1133, Cys-1145, Cys-1148, Cys-1154, Cys-1157, His-1168, and His-1177. A TAZ-type zinc finger spans residues 1177–1260; sequence HVLQKYTLQD…DCSAPRCRDI (84 aa).

Its subcellular location is the nucleus. The enzyme catalyses L-lysyl-[protein] + acetyl-CoA = N(6)-acetyl-L-lysyl-[protein] + CoA + H(+). Acetyltransferase enzyme. Acetylates histones, giving a specific tag for transcriptional activation. The protein is Probable histone acetyltransferase HAC-like 3 of Oryza sativa subsp. japonica (Rice).